Consider the following 148-residue polypeptide: Transcriptional regulator MraZ (148 aa).

SpoVT-AbrB domains follow at residues 5–51 (STQL…PQPV) and 80–123 (ASDV…DMAK).

This sequence belongs to the MraZ family. Forms oligomers.

It localises to the cytoplasm. The protein resides in the nucleoid. This chain is Transcriptional regulator MraZ, found in Nitrosomonas europaea (strain ATCC 19718 / CIP 103999 / KCTC 2705 / NBRC 14298).